The chain runs to 130 residues: Protein ApaG (130 aa).

Positions 3-127 constitute an ApaG domain; it reads KAETRGISVT…FSLDVPHVRR (125 aa).

This is Protein ApaG from Methylobacterium sp. (strain 4-46).